A 117-amino-acid chain; its full sequence is Ribonuclease P protein component (117 aa).

Belongs to the RnpA family. Consists of a catalytic RNA component (M1 or rnpB) and a protein subunit.

The catalysed reaction is Endonucleolytic cleavage of RNA, removing 5'-extranucleotides from tRNA precursor.. In terms of biological role, RNaseP catalyzes the removal of the 5'-leader sequence from pre-tRNA to produce the mature 5'-terminus. It can also cleave other RNA substrates such as 4.5S RNA. The protein component plays an auxiliary but essential role in vivo by binding to the 5'-leader sequence and broadening the substrate specificity of the ribozyme. In Thermotoga sp. (strain RQ2), this protein is Ribonuclease P protein component.